Reading from the N-terminus, the 474-residue chain is 3-isopropylmalate dehydratase large subunit (474 aa).

The [4Fe-4S] cluster site is built by C353, C414, and C417.

The protein belongs to the aconitase/IPM isomerase family. LeuC type 1 subfamily. As to quaternary structure, heterodimer of LeuC and LeuD. Requires [4Fe-4S] cluster as cofactor.

The enzyme catalyses (2R,3S)-3-isopropylmalate = (2S)-2-isopropylmalate. Its pathway is amino-acid biosynthesis; L-leucine biosynthesis; L-leucine from 3-methyl-2-oxobutanoate: step 2/4. Its function is as follows. Catalyzes the isomerization between 2-isopropylmalate and 3-isopropylmalate, via the formation of 2-isopropylmaleate. This is 3-isopropylmalate dehydratase large subunit from Pseudomonas paraeruginosa (strain DSM 24068 / PA7) (Pseudomonas aeruginosa (strain PA7)).